Here is a 337-residue protein sequence, read N- to C-terminus: Inositol 2-dehydrogenase (337 aa).

Belongs to the Gfo/Idh/MocA family. As to quaternary structure, homotetramer.

It carries out the reaction myo-inositol + NAD(+) = scyllo-inosose + NADH + H(+). In terms of biological role, involved in the oxidation of myo-inositol (MI) to 2-keto-myo-inositol (2KMI or 2-inosose). The polypeptide is Inositol 2-dehydrogenase (Ralstonia nicotianae (strain ATCC BAA-1114 / GMI1000) (Ralstonia solanacearum)).